Consider the following 251-residue polypeptide: Coproheme decarboxylase (251 aa).

Fe-coproporphyrin III contacts are provided by residues arginine 133, 147–151, histidine 174, glutamine 187, and serine 225; that span reads YPMSK. The active site involves tyrosine 147.

It belongs to the ChdC family. Type 1 subfamily. The cofactor is Fe-coproporphyrin III.

The catalysed reaction is Fe-coproporphyrin III + 2 H2O2 + 2 H(+) = heme b + 2 CO2 + 4 H2O. The enzyme catalyses Fe-coproporphyrin III + H2O2 + H(+) = harderoheme III + CO2 + 2 H2O. It carries out the reaction harderoheme III + H2O2 + H(+) = heme b + CO2 + 2 H2O. Its pathway is porphyrin-containing compound metabolism; protoheme biosynthesis. Involved in coproporphyrin-dependent heme b biosynthesis. Catalyzes the decarboxylation of Fe-coproporphyrin III (coproheme) to heme b (protoheme IX), the last step of the pathway. The reaction occurs in a stepwise manner with a three-propionate intermediate. This chain is Coproheme decarboxylase, found in Listeria welshimeri serovar 6b (strain ATCC 35897 / DSM 20650 / CCUG 15529 / CIP 8149 / NCTC 11857 / SLCC 5334 / V8).